A 331-amino-acid chain; its full sequence is Beta-ketoacyl-[acyl-carrier-protein] synthase III (331 aa).

Residues cysteine 116 and histidine 256 contribute to the active site. Residues 257–261 (QANTR) are ACP-binding. The active site involves asparagine 286.

This sequence belongs to the thiolase-like superfamily. FabH family. In terms of assembly, homodimer.

The protein resides in the cytoplasm. The catalysed reaction is malonyl-[ACP] + acetyl-CoA + H(+) = 3-oxobutanoyl-[ACP] + CO2 + CoA. It functions in the pathway lipid metabolism; fatty acid biosynthesis. Its function is as follows. Catalyzes the condensation reaction of fatty acid synthesis by the addition to an acyl acceptor of two carbons from malonyl-ACP. Catalyzes the first condensation reaction which initiates fatty acid synthesis and may therefore play a role in governing the total rate of fatty acid production. Possesses both acetoacetyl-ACP synthase and acetyl transacylase activities. Its substrate specificity determines the biosynthesis of branched-chain and/or straight-chain of fatty acids. The chain is Beta-ketoacyl-[acyl-carrier-protein] synthase III from Caldanaerobacter subterraneus subsp. tengcongensis (strain DSM 15242 / JCM 11007 / NBRC 100824 / MB4) (Thermoanaerobacter tengcongensis).